A 105-amino-acid polypeptide reads, in one-letter code: Nitrogenase-stabilizing/protective protein NifW (105 aa).

This sequence belongs to the NifW family. As to quaternary structure, homotrimer; associates with NifD.

Functionally, may protect the nitrogenase Fe-Mo protein from oxidative damage. This chain is Nitrogenase-stabilizing/protective protein NifW, found in Rhodospirillum centenum (strain ATCC 51521 / SW).